A 350-amino-acid polypeptide reads, in one-letter code: Hydroxymethylglutaryl-CoA synthase (350 aa).

Catalysis depends on E83, which acts as the Proton donor/acceptor. C115 functions as the Acyl-thioester intermediate in the catalytic mechanism. 2 residues coordinate (3S)-3-hydroxy-3-methylglutaryl-CoA: C115 and T156. A CoA-binding site is contributed by R204. (3S)-3-hydroxy-3-methylglutaryl-CoA contacts are provided by T206 and H239. H239 serves as the catalytic Proton donor/acceptor. K244 contributes to the CoA binding site. The (3S)-3-hydroxy-3-methylglutaryl-CoA site is built by N271 and S301.

Belongs to the thiolase-like superfamily. Archaeal HMG-CoA synthase family. As to quaternary structure, interacts with acetoacetyl-CoA thiolase that catalyzes the precedent step in the pathway and with a DUF35 protein. The acetoacetyl-CoA thiolase/HMG-CoA synthase complex channels the intermediate via a fused CoA-binding site, which allows for efficient coupling of the endergonic thiolase reaction with the exergonic HMGCS reaction.

The enzyme catalyses acetoacetyl-CoA + acetyl-CoA + H2O = (3S)-3-hydroxy-3-methylglutaryl-CoA + CoA + H(+). Its pathway is metabolic intermediate biosynthesis; (R)-mevalonate biosynthesis; (R)-mevalonate from acetyl-CoA: step 2/3. Functionally, catalyzes the condensation of acetyl-CoA with acetoacetyl-CoA to form 3-hydroxy-3-methylglutaryl-CoA (HMG-CoA). Functions in the mevalonate (MVA) pathway leading to isopentenyl diphosphate (IPP), a key precursor for the biosynthesis of isoprenoid compounds that are building blocks of archaeal membrane lipids. This Pyrococcus furiosus (strain ATCC 43587 / DSM 3638 / JCM 8422 / Vc1) protein is Hydroxymethylglutaryl-CoA synthase.